The sequence spans 422 residues: Serine protease HTRA2, mitochondrial (422 aa).

The transit peptide at 1-17 (MALRGCHRLEVIFKRCI) directs the protein to the mitochondrion. The propeptide occupies 18 to 74 (ASPVLHSQAGNRRSSQLAIKGVDPNSNGNSGQYQQNGEHKEKGWRRLVRFFVPFSLG). Positions 33–55 (QLAIKGVDPNSNGNSGQYQQNGE) are disordered. Residues 42–53 (NSNGNSGQYQQN) are compositionally biased toward low complexity. Residues 64-82 (LVRFFVPFSLGAAVSAAII) traverse the membrane as a helical segment. 2 consecutive short sequence motifs (IAP-binding) follow at residues 75 to 78 (AAVS) and 94 to 97 (SKMT). The interval 139-302 (SNGSGFIIEQ…IPIDYVKVFL (164 aa)) is serine protease. Catalysis depends on charge relay system residues H157, D189, and S266. In terms of domain architecture, PDZ spans 325 to 410 (MGITMLTLTP…TLDIVILRGV (86 aa)).

Belongs to the peptidase S1C family. Interacts with th/DIAP1 (via BIR 2 domain).

It localises to the mitochondrion intermembrane space. The protein resides in the mitochondrion membrane. It catalyses the reaction Cleavage of non-polar aliphatic amino-acids at the P1 position, with a preference for Val, Ile and Met. At the P2 and P3 positions, Arg is selected most strongly with a secondary preference for other hydrophilic residues.. Serine protease that shows proteolytic activity against a non-specific substrate beta-casein. Promotes or induces cell death either by direct binding to and inhibition of BIRC proteins (also called inhibitor of apoptosis proteins, IAPs), leading to an increase in caspase activity, or by a BIRC inhibition-independent, caspase-independent and serine protease activity-dependent mechanism. Can antagonize antiapoptotic activity of th/Diap1 by directly inducing the degradation of th/Diap1. The sequence is that of Serine protease HTRA2, mitochondrial from Drosophila simulans (Fruit fly).